The sequence spans 318 residues: ATP phosphoribosyltransferase regulatory subunit (318 aa).

Belongs to the class-II aminoacyl-tRNA synthetase family. HisZ subfamily. In terms of assembly, heteromultimer composed of HisG and HisZ subunits.

The protein localises to the cytoplasm. The protein operates within amino-acid biosynthesis; L-histidine biosynthesis; L-histidine from 5-phospho-alpha-D-ribose 1-diphosphate: step 1/9. In terms of biological role, required for the first step of histidine biosynthesis. May allow the feedback regulation of ATP phosphoribosyltransferase activity by histidine. This Lactococcus lactis subsp. cremoris (strain SK11) protein is ATP phosphoribosyltransferase regulatory subunit.